Reading from the N-terminus, the 290-residue chain is Small ribosomal subunit biogenesis GTPase RsgA (290 aa).

The CP-type G domain maps to 62-219 (DNYLIRPQVA…VVDTPGFSTL (158 aa)). Residues 111-114 (NKID) and 162-170 (GPSGVGKST) contribute to the GTP site. 4 residues coordinate Zn(2+): cysteine 243, cysteine 248, histidine 250, and cysteine 256.

It belongs to the TRAFAC class YlqF/YawG GTPase family. RsgA subfamily. In terms of assembly, monomer. Associates with 30S ribosomal subunit, binds 16S rRNA. The cofactor is Zn(2+).

It localises to the cytoplasm. Functionally, one of several proteins that assist in the late maturation steps of the functional core of the 30S ribosomal subunit. Helps release RbfA from mature subunits. May play a role in the assembly of ribosomal proteins into the subunit. Circularly permuted GTPase that catalyzes slow GTP hydrolysis, GTPase activity is stimulated by the 30S ribosomal subunit. The chain is Small ribosomal subunit biogenesis GTPase RsgA from Clostridium novyi (strain NT).